A 212-amino-acid polypeptide reads, in one-letter code: MMVIFLGPPGAGKGTQGKKIAKKIDLPHIAIGDIFRTIIKTSTSEAELINNYVKQGELIPNEIVNQVIKNFLLSSEYKNGYILDGYPRNLEQAKFFESFIKEKIKIIYFDVSDELLIKRILGRYSCKNCGKIYNRYFVQPKTDNVCDVCGSSTFDYRKDDNEEVIKKRIEVYKTETYPLIDYYKNSGNFYIVNGSKNEQEIEIDIQKILKIN.

Residue 10-15 (GAGKGT) coordinates ATP. Positions 30 to 59 (AIGDIFRTIIKTSTSEAELINNYVKQGELI) are NMP. AMP-binding positions include R36, 57-59 (ELI), 85-88 (GYPR), and Q92. The tract at residues 122-160 (GRYSCKNCGKIYNRYFVQPKTDNVCDVCGSSTFDYRKDD) is LID. R123 is a binding site for ATP. Zn(2+) contacts are provided by C126 and C129. Residue 132 to 133 (IY) participates in ATP binding. Positions 146 and 149 each coordinate Zn(2+). Positions 157 and 168 each coordinate AMP. K196 serves as a coordination point for ATP.

This sequence belongs to the adenylate kinase family. As to quaternary structure, monomer.

Its subcellular location is the cytoplasm. The catalysed reaction is AMP + ATP = 2 ADP. It participates in purine metabolism; AMP biosynthesis via salvage pathway; AMP from ADP: step 1/1. Catalyzes the reversible transfer of the terminal phosphate group between ATP and AMP. Plays an important role in cellular energy homeostasis and in adenine nucleotide metabolism. The polypeptide is Adenylate kinase (Rickettsia conorii (strain ATCC VR-613 / Malish 7)).